Consider the following 41-residue polypeptide: U-megalopygitoxin(11)-Mo28 (41 aa).

The signal sequence occupies residues 1 to 29; the sequence is MRTTLLLLIIAITVMVFVSEAYAAPAPEP.

This sequence belongs to the caterpillar 11 family. In terms of tissue distribution, expressed by the venom apparatus.

The protein resides in the secreted. Functionally, probable toxin. In Megalopyge opercularis (Southern flannel moth), this protein is U-megalopygitoxin(11)-Mo28.